The following is a 613-amino-acid chain: GPI mannosyltransferase 3 (613 aa).

Residue N19 is glycosylated (N-linked (GlcNAc...) asparagine). Helical transmembrane passes span 22 to 42 (FFLRDIIVIRLINAWWIATFF), 83 to 103 (LFAGVYLVADFISSHILPVGI), 106 to 126 (ATILVAVPQALQAVIAGLGDW), 132 to 152 (AVSIYGANSNVSFFALFLQIF), 168 to 188 (LEMTLTVMAMYYWPWELLGVA), 216 to 236 (LAVVLRPTNILIWATIVLFTI), 252 to 272 (VVTLIREAIWCGSLILAISAA), 280 to 300 (FWTFPAYNFLYFNLSKSLAVF), 309 to 329 (YFLQGLPLICTTSLPFAVASL), 342 to 362 (FNVLKTLAYTVFTTVGALSLI), 369 to 389 (FIYPLLPALSILAAPYTASFF), and 411 to 431 (YLFVALGVNMFLAGYLSFFHQ).

It belongs to the glycosyltransferase 22 family. PIGB subfamily.

It localises to the endoplasmic reticulum membrane. The protein operates within glycolipid biosynthesis; glycosylphosphatidylinositol-anchor biosynthesis. Functionally, mannosyltransferase involved in glycosylphosphatidylinositol-anchor biosynthesis. Transfers the third mannose to Man2-GlcN-acyl-PI during GPI precursor assembly. The protein is GPI mannosyltransferase 3 (GPI10) of Gibberella zeae (strain ATCC MYA-4620 / CBS 123657 / FGSC 9075 / NRRL 31084 / PH-1) (Wheat head blight fungus).